A 438-amino-acid polypeptide reads, in one-letter code: Arginine deiminase-like protein (438 aa).

It belongs to the arginine deiminase family.

The polypeptide is Arginine deiminase-like protein (Mycoplasma pneumoniae (strain ATCC 29342 / M129 / Subtype 1) (Mycoplasmoides pneumoniae)).